The sequence spans 428 residues: Tyrosine--tRNA ligase (428 aa).

Residue Tyr-41 coordinates L-tyrosine. Positions 46–55 (PTADSLHLGH) match the 'HIGH' region motif. N6-acetyllysine is present on Lys-148. Residues Tyr-179 and Gln-183 each coordinate L-tyrosine. The 'KMSKS' region motif lies at 239 to 243 (KFGKT). Residue Lys-242 participates in ATP binding. An S4 RNA-binding domain is found at 361–418 (ADLMQALVDSELQPSRGQARKTIASNAITINGEKQSDPEYFFKEEDRLFGRFTLLRRG).

It belongs to the class-I aminoacyl-tRNA synthetase family. TyrS type 1 subfamily. As to quaternary structure, homodimer.

It localises to the cytoplasm. The enzyme catalyses tRNA(Tyr) + L-tyrosine + ATP = L-tyrosyl-tRNA(Tyr) + AMP + diphosphate + H(+). In terms of biological role, catalyzes the attachment of tyrosine to tRNA(Tyr) in a two-step reaction: tyrosine is first activated by ATP to form Tyr-AMP and then transferred to the acceptor end of tRNA(Tyr). This is Tyrosine--tRNA ligase from Escherichia coli O1:K1 / APEC.